A 487-amino-acid polypeptide reads, in one-letter code: Cytochrome P450 2C4 (487 aa).

Residue Cys-432 coordinates heme.

This sequence belongs to the cytochrome P450 family. It depends on heme as a cofactor.

The protein resides in the endoplasmic reticulum membrane. It is found in the microsome membrane. It carries out the reaction an organic molecule + reduced [NADPH--hemoprotein reductase] + O2 = an alcohol + oxidized [NADPH--hemoprotein reductase] + H2O + H(+). Its function is as follows. Cytochromes P450 are a group of heme-thiolate monooxygenases. In liver microsomes, this enzyme is involved in an NADPH-dependent electron transport pathway. It oxidizes a variety of structurally unrelated compounds, including steroids, fatty acids, and xenobiotics. The polypeptide is Cytochrome P450 2C4 (CYP2C4) (Oryctolagus cuniculus (Rabbit)).